The primary structure comprises 79 residues: Acyl carrier protein (79 aa).

In terms of domain architecture, Carrier spans 3-78 (QEILEKVCSI…DAVKFIEEKK (76 aa)). Ser-38 is subject to O-(pantetheine 4'-phosphoryl)serine.

It belongs to the acyl carrier protein (ACP) family. 4'-phosphopantetheine is transferred from CoA to a specific serine of apo-ACP by AcpS. This modification is essential for activity because fatty acids are bound in thioester linkage to the sulfhydryl of the prosthetic group.

It is found in the cytoplasm. It participates in lipid metabolism; fatty acid biosynthesis. In terms of biological role, carrier of the growing fatty acid chain in fatty acid biosynthesis. This chain is Acyl carrier protein, found in Prochlorococcus marinus (strain MIT 9301).